We begin with the raw amino-acid sequence, 867 residues long: Protein translocase subunit SecA 1 (867 aa).

ATP is bound by residues Gln86, 104 to 108 (GEGKT), and Asp493.

Belongs to the SecA family. Monomer and homodimer. Part of the essential Sec protein translocation apparatus which comprises SecA, SecYEG and auxiliary proteins SecDF. Other proteins may also be involved.

It is found in the cell membrane. Its subcellular location is the cytoplasm. The catalysed reaction is ATP + H2O + cellular proteinSide 1 = ADP + phosphate + cellular proteinSide 2.. In terms of biological role, part of the Sec protein translocase complex. Interacts with the SecYEG preprotein conducting channel. Has a central role in coupling the hydrolysis of ATP to the transfer of proteins into and across the cell membrane, serving as an ATP-driven molecular motor driving the stepwise translocation of polypeptide chains across the membrane. The chain is Protein translocase subunit SecA 1 from Corynebacterium jeikeium (strain K411).